A 447-amino-acid chain; its full sequence is C4-dicarboxylate transport protein 3 (447 aa).

8 helical membrane passes run 5-27 (TLGK…GVAA), 42-64 (IKLI…IARM), 77-99 (ALVY…VNLV), 146-165 (LARN…GIAL), 186-208 (VFSI…MAFT), 223-245 (LMAT…VARL), 315-337 (IFVA…LGVL), and 352-374 (FITL…VLLL).

It belongs to the dicarboxylate/amino acid:cation symporter (DAACS) (TC 2.A.23) family.

The protein localises to the cell inner membrane. In terms of biological role, responsible for the transport of dicarboxylates such as succinate, fumarate, and malate from the periplasm across the membrane. The polypeptide is C4-dicarboxylate transport protein 3 (dctA3) (Ralstonia nicotianae (strain ATCC BAA-1114 / GMI1000) (Ralstonia solanacearum)).